Consider the following 199-residue polypeptide: ATP-dependent Clp protease proteolytic subunit 2 (199 aa).

The Nucleophile role is filled by Ser98. Residue His123 is part of the active site.

This sequence belongs to the peptidase S14 family. In terms of assembly, fourteen ClpP subunits assemble into 2 heptameric rings which stack back to back to give a disk-like structure with a central cavity, resembling the structure of eukaryotic proteasomes.

It localises to the cytoplasm. The enzyme catalyses Hydrolysis of proteins to small peptides in the presence of ATP and magnesium. alpha-casein is the usual test substrate. In the absence of ATP, only oligopeptides shorter than five residues are hydrolyzed (such as succinyl-Leu-Tyr-|-NHMec, and Leu-Tyr-Leu-|-Tyr-Trp, in which cleavage of the -Tyr-|-Leu- and -Tyr-|-Trp bonds also occurs).. Its function is as follows. Cleaves peptides in various proteins in a process that requires ATP hydrolysis. Has a chymotrypsin-like activity. Plays a major role in the degradation of misfolded proteins. This is ATP-dependent Clp protease proteolytic subunit 2 from Corynebacterium diphtheriae (strain ATCC 700971 / NCTC 13129 / Biotype gravis).